Here is a 574-residue protein sequence, read N- to C-terminus: Myo-inositol transporter FST1 (574 aa).

Over 1-76 (MGKSRQNSTT…VQFANPKHFT (76 aa)) the chain is Cytoplasmic. The chain crosses the membrane as a helical span at residues 77–97 (WLLVAFASMGGLLSGLDQSLI). At 98–115 (SGANLFLPDDLGLTEHEN) the chain is on the extracellular side. The chain crosses the membrane as a helical span at residues 116 to 136 (SLVNSGMPLGAVGGALLLSPA). Residues 137 to 143 (NEYFGRK) lie on the Cytoplasmic side of the membrane. The helical transmembrane segment at 144-164 (GAIIISIILYTIGAALEAGSI) threads the bilayer. Residues 165–173 (NFGMIVSSR) lie on the Extracellular side of the membrane. The helical transmembrane segment at 174-194 (VILGLGVGLEGGTVPVYVAET) threads the bilayer. Residues 195–205 (VERRIRGNLVS) lie on the Cytoplasmic side of the membrane. Residues 206 to 226 (LYQFNIALGEVLGYAVGAIFL) form a helical membrane-spanning segment. Residues 227–233 (NVPGNWR) are Extracellular-facing. Residues 234 to 254 (YILGSSLLFSTIMFFGMLFLP) form a helical membrane-spanning segment. The Cytoplasmic segment spans residues 255–330 (ESPRFLIHQK…RARRALVYAN (76 aa)). Residues 331–351 (IMILLGQLTGVNAIMYYMSVL) traverse the membrane as a helical segment. The Extracellular portion of the chain corresponds to 352 to 363 (MNQIGFDKKESN). Residues 364–384 (YMSLVGGGSLLLGTIPAIFLM) form a helical membrane-spanning segment. Topologically, residues 385 to 390 (ERFGRR) are cytoplasmic. The chain crosses the membrane as a helical span at residues 391 to 411 (FWAITMLPGFFIGLVLIGVSY). The Extracellular segment spans residues 412–426 (QFDVETQLQTVEGLY). Residues 427–447 (LSGLIIYMGFFGSYACLTWVV) traverse the membrane as a helical segment. The Cytoplasmic segment spans residues 448–465 (PSEVYPTYLRSYGMTTSD). Residues 466 to 486 (ALLFLASFIVTYNFTAMQNAM) traverse the membrane as a helical segment. Residues 487-490 (GKTG) lie on the Extracellular side of the membrane. Residues 491–511 (LALGFYGGIAFIGEIYQIFFM) traverse the membrane as a helical segment. The Cytoplasmic portion of the chain corresponds to 512 to 574 (PETKNKTLEE…PKDQVQVSHA (63 aa)).

The protein belongs to the major facilitator superfamily. Sugar transporter (TC 2.A.1.1) family.

Its subcellular location is the cell membrane. It catalyses the reaction myo-inositol(out) + H(+)(out) = myo-inositol(in) + H(+)(in). Transporter for myo-inositol. Also appears to transport the polyketide mycotoxin fumonisin B1 (FB1). Does not appear to transport hexose sugars. In Gibberella moniliformis (strain M3125 / FGSC 7600) (Maize ear and stalk rot fungus), this protein is Myo-inositol transporter FST1.